The primary structure comprises 485 residues: Sperm-associated antigen 8 (485 aa).

3 disordered regions span residues 1 to 42 (METN…SPRS), 75 to 98 (KTPA…EPCA), and 127 to 215 (TTTD…CIPP). Residues 132-150 (SSNPGPVPGSSSGPVLGSS) show a composition bias toward low complexity. A compositionally biased stretch (gly residues) spans 151–191 (SGAGHGSGSGSGPGCGSVPGSGSGPGPGSGPGSGPGHGSGS). 2 mn regions span residues 327-340 (SSTT…PPGN) and 379-393 (ESVT…LAQA).

Belongs to the SPAG8 family. In terms of assembly, microtubule inner protein component of sperm flagellar doublet microtubules. Interacts with FHL5 (via second LIM domain). Interacts with RANBP9. Expressed in testis (germ cells), but not in liver, kidney, prostate and small intestine. Expressed in airway epithelial cells.

It is found in the cytoplasm. The protein resides in the nucleus. Its subcellular location is the cytoplasmic vesicle. The protein localises to the secretory vesicle. It localises to the acrosome. It is found in the cytoskeleton. The protein resides in the microtubule organizing center. Its subcellular location is the spindle. The protein localises to the cilium axoneme. It localises to the flagellum axoneme. Functionally, microtubule inner protein (MIP) part of the dynein-decorated doublet microtubules (DMTs) in cilia axoneme, which is required for motile cilia beating. Plays a role in spermatogenesis by enhancing the binding of CREM isoform tau to its coactivator FHL5 and increasing the FHL5-regulated transcriptional activation of CREM isoform tau. Involved in the acrosome reaction and in binding of sperm to the zona pellucida. Plays a role in regulation of the cell cycle by controlling progression through the G2/M phase, possibly by delaying the activation of CDK1 which is required for entry into mitosis. May play a role in fertility and microtubule formation through interaction with RANBP9. The sequence is that of Sperm-associated antigen 8 from Homo sapiens (Human).